We begin with the raw amino-acid sequence, 359 residues long: Non-classical arabinogalactan protein 31 (359 aa).

Residues 1 to 24 (MGFIGKSVLVSLVALWCFTSSVFT) form the signal peptide. Residues 31-215 (TQTPSLAPAP…PPVSPPTKPP (185 aa)) form a disordered region. Basic residues predominate over residues 44–66 (HHGHHHPHPPHHHHPHPHPHPHP). The segment covering 67–215 (PAKSPVKPPV…PPVSPPTKPP (149 aa)) has biased composition (pro residues). 4-hydroxyproline is present on residues proline 71, proline 75, proline 79, proline 82, proline 83, proline 87, proline 91, proline 95, proline 99, proline 103, proline 107, proline 111, proline 114, proline 115, proline 119, proline 123, proline 127, proline 131, proline 135, proline 139, proline 143, proline 147, proline 151, proline 155, proline 159, proline 163, proline 167, proline 171, proline 175, proline 179, proline 183, proline 186, proline 187, proline 191, proline 195, proline 199, proline 203, proline 207, proline 210, proline 211, proline 215, and proline 219. 42 O-linked (Ara...) hydroxyproline glycosylation sites follow: proline 71, proline 75, proline 79, proline 82, proline 83, proline 87, proline 91, proline 95, proline 99, proline 103, proline 107, proline 111, proline 114, proline 115, proline 119, proline 123, proline 127, proline 131, proline 135, proline 139, proline 143, proline 147, proline 151, proline 155, proline 159, proline 163, proline 167, proline 171, proline 175, proline 179, proline 183, proline 186, proline 187, proline 191, proline 195, proline 199, proline 203, proline 207, proline 210, proline 211, proline 215, and proline 219. Copy 1 of the repeat occupies 90-109 (PPVYPPTKAPVKPPTKPPVK). 3 repeat units span residues 122–141 (PPVYPPTKAPVKPPTKPPVK), 142–161 (PPVYPPTKAPVKPPTKPPVK), and 162–181 (PPVYPPTKAPVKPPTKPPVK). N-linked (GlcNAc...) asparagine glycosylation is found at asparagine 226 and asparagine 269.

Belongs to the non-classical AGP family. In terms of processing, hydroxylated on numerous prolines in the proline-rich region. Post-translationally, O-glycosylated on numerous hydroxyprolines in the proline-rich region; noncontiguous hydroxylproline residues are glycosylated with arabinogalactan. Expressed in vascular bundles of roots, leaves, sepals and stamen filaments, and pistils but not stigma.

Its subcellular location is the secreted. The protein localises to the cell wall. Its function is as follows. Proteoglycan that may contribute to the strengthening of cell walls. This is Non-classical arabinogalactan protein 31 from Arabidopsis thaliana (Mouse-ear cress).